The primary structure comprises 157 residues: 2-C-methyl-D-erythritol 2,4-cyclodiphosphate synthase (157 aa).

Residues aspartate 8 and histidine 10 each contribute to the a divalent metal cation site. Residues 8–10 and 34–35 each bind 4-CDP-2-C-methyl-D-erythritol 2-phosphate; these read DVH and HS. Histidine 42 serves as a coordination point for a divalent metal cation. Residues 56–58, 61–65, 100–106, 132–135, phenylalanine 139, and arginine 142 contribute to the 4-CDP-2-C-methyl-D-erythritol 2-phosphate site; these read DIG, FPDTD, AQAPKMA, and TTTE.

It belongs to the IspF family. In terms of assembly, homotrimer. A divalent metal cation is required as a cofactor.

It catalyses the reaction 4-CDP-2-C-methyl-D-erythritol 2-phosphate = 2-C-methyl-D-erythritol 2,4-cyclic diphosphate + CMP. It participates in isoprenoid biosynthesis; isopentenyl diphosphate biosynthesis via DXP pathway; isopentenyl diphosphate from 1-deoxy-D-xylulose 5-phosphate: step 4/6. Involved in the biosynthesis of isopentenyl diphosphate (IPP) and dimethylallyl diphosphate (DMAPP), two major building blocks of isoprenoid compounds. Catalyzes the conversion of 4-diphosphocytidyl-2-C-methyl-D-erythritol 2-phosphate (CDP-ME2P) to 2-C-methyl-D-erythritol 2,4-cyclodiphosphate (ME-CPP) with a corresponding release of cytidine 5-monophosphate (CMP). In Pseudomonas syringae pv. syringae (strain B728a), this protein is 2-C-methyl-D-erythritol 2,4-cyclodiphosphate synthase.